The primary structure comprises 263 residues: uncharacterized protein (263 aa).

Belongs to the AtsA family.

The protein resides in the plastid. The protein localises to the chloroplast. This is an uncharacterized protein from Porphyra purpurea (Red seaweed).